The chain runs to 1481 residues: Cystic fibrosis transmembrane conductance regulator (1481 aa).

The Cytoplasmic segment spans residues 1–77; sequence MQRSPLEKAS…KLINALRRCF (77 aa). A helical transmembrane segment spans residues 78-98; that stretch reads FWRFMFYGIILYLGEVTKAVQ. Residues 81–365 enclose the ABC transmembrane type-1 1 domain; sequence FMFYGIILYL…WAVQTWYDSL (285 aa). The Extracellular segment spans residues 99–122; sequence PLLLGRIIASYDPDNKVERSIAIY. The helical transmembrane segment at 123–146 threads the bilayer; the sequence is LGIGLCLLFIVRTLLLHPAIFGLH. Over 147 to 195 the chain is Cytoplasmic; it reads HIGMQMRIAMFSLIYKKTLKLSSRVLDKISIGQLVSLLSNNLNKFDEGL. Residues 196–216 traverse the membrane as a helical segment; the sequence is ALAHFVWIAPLQVTLLMGLLW. The Extracellular portion of the chain corresponds to 217–222; it reads DLLQAF. The chain crosses the membrane as a helical span at residues 223 to 243; sequence TFCGLAFLVVLALLQAGLGKM. Residues 244-298 are Cytoplasmic-facing; that stretch reads MMKYRDQRAGKINERLVITSEMIENIQSVKAYCWEEAMEKIIENLRQTELKLTRK. The chain crosses the membrane as a helical span at residues 299 to 319; sequence AAYVRYLNSSAFFFSGFFVVF. The Extracellular segment spans residues 320 to 339; sequence LSVLPYALLKGIILRKIFTT. A helical membrane pass occupies residues 340–358; the sequence is ISFCIVLRMAVTRQFPWAV. At 359 to 858 the chain is on the cytoplasmic side; sequence QTWYDSLGAI…YLRYITVHKS (500 aa). ATP-binding positions include tryptophan 401, 457 to 464, and glutamine 492; that span reads GSTGAGKT. The region spanning 421-645 is the ABC transporter 1 domain; sequence ISNCDTSLFF…RPDFSSKLMG (225 aa). Cysteine 523 carries the S-palmitoyl cysteine lipid modification. Residues serine 548 and serine 659 each carry the phosphoserine modification. Positions 653-831 are disordered R region; it reads TAERRNSIIT…EEINEEDLRD (179 aa). Serine 669 is subject to Phosphoserine; by PKA. At serine 685 the chain carries Phosphoserine. Lysine 687 participates in a covalent cross-link: Glycyl lysine isopeptide (Lys-Gly) (interchain with G-Cter in ubiquitin). Phosphoserine occurs at positions 699 and 711. Residue threonine 716 is modified to Phosphothreonine. Phosphoserine is present on residues serine 736, serine 767, serine 790, serine 795, and serine 813. The helical transmembrane segment at 859 to 879 threads the bilayer; sequence LMFVLIWCLVVFLVEVAASLV. The 297-residue stretch at 859–1155 folds into the ABC transmembrane type-1 2 domain; the sequence is LMFVLIWCLV…AVNSSIDVDS (297 aa). The Extracellular portion of the chain corresponds to 880–918; it reads VLCLFPKILLQDKGNSTKNASNSYAVIITSTSSYYIFYI. Asparagine 894 and asparagine 898 each carry an N-linked (GlcNAc...) asparagine glycan. The chain crosses the membrane as a discontinuously helical span at residues 919–939; it reads YVGVADTLLALGLFRGLPLVH. Topologically, residues 940–990 are cytoplasmic; it reads TLITVSKTLHHKMLQSVLQAPMSTLNTLKTGGILNRFSKDIAVLDDLLPLT. A helical transmembrane segment spans residues 991–1011; that stretch reads IFDFIQLLLIVIGAVVVVSVL. Residues 1012-1013 are Extracellular-facing; that stretch reads QP. The chain crosses the membrane as a helical span at residues 1014–1034; sequence YIFLATVPVIAAFILLRGYFL. Residues 1035–1095 are Cytoplasmic-facing; that stretch reads HTSQQLKQLE…TANWFLYLST (61 aa). A helical membrane pass occupies residues 1096 to 1116; sequence LRWFQMRIEMIFVIFFIAVTF. The Extracellular segment spans residues 1117 to 1130; it reads ISILTTGEGEGRVG. The chain crosses the membrane as a helical span at residues 1131-1151; that stretch reads IILTLAMNIMGTLQWAVNSSI. Residues 1152–1481 lie on the Cytoplasmic side of the membrane; sequence DVDSLMRSVS…TEEEVQETKL (330 aa). The ABC transporter 2 domain occupies 1211 to 1444; sequence MTVKDLTAKY…KSLFRQAISP (234 aa). ATP-binding positions include tyrosine 1220 and 1245 to 1252; that span reads GRTGSGKS. The interval 1387 to 1481 is interaction with GORASP2; it reads RTLKQAFADC…TEEEVQETKL (95 aa). A lipid anchor (S-palmitoyl cysteine) is attached at cysteine 1396. Position 1457 is a phosphoserine (serine 1457). Positions 1479–1481 match the PDZ-binding motif; sequence TKL.

Belongs to the ABC transporter superfamily. ABCC family. CFTR transporter (TC 3.A.1.202) subfamily. Monomer; does not require oligomerization for channel activity. May form oligomers in the membrane. Interacts with SLC26A3, SLC26A6 and NHERF1. Interacts with SHANK2. Interacts with MYO6. Interacts (via C-terminus) with GOPC (via PDZ domain); this promotes CFTR internalization and thereby decreases channel activity. Interacts with SLC4A7 through NHERF1. Found in a complex with MYO5B and RAB11A. Interacts with ANO1. Interacts with SLC26A8. Interacts with AHCYL1; the interaction increases CFTR activity. Interacts with CSE1L. The core-glycosylated form interacts with GORASP2 (via PDZ GRASP-type 1 domain) in respone to ER stress. Interacts with MARCHF2; the interaction leads to CFTR ubiqtuitination and degradation. Interacts with ADGRG2. Post-translationally, N-glycosylated. Phosphorylated; cAMP treatment promotes phosphorylation and activates the channel. Dephosphorylation decreases the ATPase activity (in vitro). Phosphorylation at PKA sites activates the channel. Phosphorylation at PKC sites enhances the response to phosphorylation by PKA. Phosphorylated by AMPK; this inhibits channel activity. In terms of processing, ubiquitinated, leading to its degradation in the lysosome. Deubiquitination by USP10 in early endosomes enhances its endocytic recycling to the cell membrane. Ubiquitinated by RNF185 during ER stress. Ubiquitinated by MARCHF2.

The protein localises to the apical cell membrane. Its subcellular location is the early endosome membrane. It localises to the cell membrane. It is found in the recycling endosome membrane. The protein resides in the endoplasmic reticulum membrane. The protein localises to the nucleus. It catalyses the reaction ATP + H2O + closed Cl(-) channel = ADP + phosphate + open Cl(-) channel.. The catalysed reaction is chloride(in) = chloride(out). It carries out the reaction hydrogencarbonate(in) = hydrogencarbonate(out). The enzyme catalyses ATP + H2O = ADP + phosphate + H(+). Its function is as follows. Epithelial ion channel that plays an important role in the regulation of epithelial ion and water transport and fluid homeostasis. Mediates the transport of chloride ions across the cell membrane. Possesses an intrinsic ATPase activity and utilizes ATP to gate its channel; the passive flow of anions through the channel is gated by cycles of ATP binding and hydrolysis by the ATP-binding domains. The ion channel is also permeable to HCO(3)(-); selectivity depends on the extracellular chloride concentration. Exerts its function also by modulating the activity of other ion channels and transporters. Contributes to the regulation of the pH and the ion content of the epithelial fluid layer. Modulates the activity of the epithelial sodium channel (ENaC) complex, in part by regulating the cell surface expression of the ENaC complex. May regulate bicarbonate secretion and salvage in epithelial cells by regulating the transporter SLC4A7. Can inhibit the chloride channel activity of ANO1. Plays a role in the chloride and bicarbonate homeostasis during sperm epididymal maturation and capacitation. The sequence is that of Cystic fibrosis transmembrane conductance regulator from Ovis aries (Sheep).